The sequence spans 276 residues: Large ribosomal subunit protein uL2 (276 aa).

Residues 225–276 (MNPVDHPHGGGEGRAPVGRKHPVTPWGKPAMGAKTRKKRKLSDKLIVKPRNK) are disordered. The segment covering 258-276 (KTRKKRKLSDKLIVKPRNK) has biased composition (basic residues).

This sequence belongs to the universal ribosomal protein uL2 family. Part of the 50S ribosomal subunit. Forms a bridge to the 30S subunit in the 70S ribosome.

One of the primary rRNA binding proteins. Required for association of the 30S and 50S subunits to form the 70S ribosome, for tRNA binding and peptide bond formation. It has been suggested to have peptidyltransferase activity; this is somewhat controversial. Makes several contacts with the 16S rRNA in the 70S ribosome. In Moorella thermoacetica (strain ATCC 39073 / JCM 9320), this protein is Large ribosomal subunit protein uL2.